Here is a 115-residue protein sequence, read N- to C-terminus: Large ribosomal subunit protein bL20c (115 aa).

Belongs to the bacterial ribosomal protein bL20 family.

It is found in the plastid. The protein resides in the chloroplast. Its function is as follows. Binds directly to 23S ribosomal RNA and is necessary for the in vitro assembly process of the 50S ribosomal subunit. It is not involved in the protein synthesizing functions of that subunit. This is Large ribosomal subunit protein bL20c from Angiopteris evecta (Mule's foot fern).